A 456-amino-acid polypeptide reads, in one-letter code: Glycerol-3-phosphate acyltransferase 4 (456 aa).

Residues 1–37 form the signal peptide; that stretch reads MFLLLPFDSLIVSLLGISLTVLFTLLLVFIIVPAVFG. 2 helical membrane-spanning segments follow: residues 156–176 and 180–200; these read ISLR…CLLL and IALA…VGYL. N-linked (GlcNAc...) asparagine glycosylation occurs at Asn-247. An HXXXXD motif motif is present at residues 248–253; that stretch reads HTSPID. Residues Asn-327, Asn-328, and Asn-362 are each glycosylated (N-linked (GlcNAc...) asparagine).

The protein belongs to the 1-acyl-sn-glycerol-3-phosphate acyltransferase family.

The protein localises to the endoplasmic reticulum membrane. The enzyme catalyses sn-glycerol 3-phosphate + an acyl-CoA = a 1-acyl-sn-glycero-3-phosphate + CoA. The catalysed reaction is dodecanoyl-CoA + sn-glycerol 3-phosphate = 1-dodecanoyl-sn-glycerol 3-phosphate + CoA. It catalyses the reaction sn-glycerol 3-phosphate + hexadecanoyl-CoA = 1-hexadecanoyl-sn-glycero-3-phosphate + CoA. It carries out the reaction sn-glycerol 3-phosphate + octadecanoyl-CoA = 1-octadecanoyl-sn-glycero-3-phosphate + CoA. The enzyme catalyses sn-glycerol 3-phosphate + (9Z)-octadecenoyl-CoA = 1-(9Z-octadecenoyl)-sn-glycero-3-phosphate + CoA. The catalysed reaction is (9Z,12Z)-octadecadienoyl-CoA + sn-glycerol 3-phosphate = 1-(9Z,12Z)-octadecadienoyl-sn-glycero-3-phosphate + CoA. It functions in the pathway phospholipid metabolism; CDP-diacylglycerol biosynthesis; CDP-diacylglycerol from sn-glycerol 3-phosphate: step 1/3. Its function is as follows. Converts glycerol-3-phosphate to 1-acyl-sn-glycerol-3-phosphate (lysophosphatidic acid or LPA) by incorporating an acyl moiety at the sn-1 position of the glycerol backbone. Active against both saturated and unsaturated long-chain fatty acyl-CoAs. Protects cells against lipotoxicity. This Bos taurus (Bovine) protein is Glycerol-3-phosphate acyltransferase 4.